Reading from the N-terminus, the 369-residue chain is Peptide chain release factor 1 (369 aa).

Residue Gln238 is modified to N5-methylglutamine.

Belongs to the prokaryotic/mitochondrial release factor family. Post-translationally, methylated by PrmC. Methylation increases the termination efficiency of RF1.

It localises to the cytoplasm. Its function is as follows. Peptide chain release factor 1 directs the termination of translation in response to the peptide chain termination codons UAG and UAA. This Parabacteroides distasonis (strain ATCC 8503 / DSM 20701 / CIP 104284 / JCM 5825 / NCTC 11152) protein is Peptide chain release factor 1.